The chain runs to 346 residues: 3 beta-hydroxysteroid dehydrogenase/Delta 5--&gt;4-isomerase (346 aa).

Tyrosine 147 acts as the Proton acceptor in catalysis. Lysine 151 is an NAD(+) binding site.

It belongs to the 3-beta-HSD family.

It carries out the reaction a 3beta-hydroxy-Delta(5)-steroid + NAD(+) = a 3-oxo-Delta(5)-steroid + NADH + H(+). The catalysed reaction is a 3-oxo-Delta(5)-steroid = a 3-oxo-Delta(4)-steroid. The protein operates within lipid metabolism; steroid biosynthesis. Functionally, catalyzes the oxidative conversion of Delta(5)-ene-3-beta-hydroxy steroid, and the oxidative conversion of ketosteroids. The 3-beta-HSD enzymatic system plays a crucial role in the biosynthesis of all classes of hormonal steroids. During viral infection, steroid production contributes to virulence by inhibiting the host inflammatory response. The chain is 3 beta-hydroxysteroid dehydrogenase/Delta 5--&gt;4-isomerase (OPG174) from Homo sapiens (Human).